We begin with the raw amino-acid sequence, 135 residues long: Transcription antitermination protein NusB (135 aa).

The protein belongs to the NusB family.

In terms of biological role, involved in transcription antitermination. Required for transcription of ribosomal RNA (rRNA) genes. Binds specifically to the boxA antiterminator sequence of the ribosomal RNA (rrn) operons. In Clostridium perfringens (strain SM101 / Type A), this protein is Transcription antitermination protein NusB.